The chain runs to 772 residues: A type blood N-acetyl-alpha-D-galactosamine deacetylase (772 aa).

An N-terminal signal peptide occupies residues 1 to 27 (MRNRRKAVSLLTGLLVTAQLFPTAALA). Ser87 and His123 together coordinate substrate. A divalent metal cation is bound at residue Asp126. Positions 180–402 (WSKPTSDAER…WRIGYAENSF (223 aa)) are deacetylase activity. Tyr236 contacts substrate. His278 is an a divalent metal cation binding site. Residues 494–605 (SDDLEIAVVE…KDLVASGSDW (112 aa)) form the F5/8 type C domain. A CBM32 carbohydrate-binding domain region spans residues 502-765 (VENPYTLIPQ…VCVSPVVDFD (264 aa)). The tract at residues 515–772 (TATATSVYGG…DFDYFSYVGE (258 aa)) is not required for activity on soluble substrates.

A divalent metal cation is required as a cofactor.

The catalysed reaction is an N-acetyl-alpha-D-galactosaminyl-(1-&gt;3)-[alpha-L-fucosyl-(1-&gt;2)]-beta-D-galactosyl derivative + H2O = an alpha-D-galactosaminyl-(1-&gt;3)-[alpha-L-fucosyl-(1-&gt;2)]-beta-D-galactosyl derivative + acetate. Its activity is regulated as follows. Inhibited by EDTA. Its function is as follows. One of an enzyme pair that work together to convert the A antigen to the H antigen of the O blood type, which together release galactosamine. Catalyzes the first step in the conversion, generating the substrate for the subsequent enzyme (FpGalNase, AC P0DTR5). Works on many different A antigen subtypes. Glu-90 probably activates a nucleophilic water molecule to start the deacetylation reaction. This is A type blood N-acetyl-alpha-D-galactosamine deacetylase from Flavonifractor plautii (Fusobacterium plautii).